A 204-amino-acid polypeptide reads, in one-letter code: Urease accessory protein UreG (204 aa).

Position 12 to 19 (12 to 19) interacts with GTP; sequence GPVGSGKT.

Belongs to the SIMIBI class G3E GTPase family. UreG subfamily. In terms of assembly, homodimer. UreD, UreF and UreG form a complex that acts as a GTP-hydrolysis-dependent molecular chaperone, activating the urease apoprotein by helping to assemble the nickel containing metallocenter of UreC. The UreE protein probably delivers the nickel.

Its subcellular location is the cytoplasm. Its function is as follows. Facilitates the functional incorporation of the urease nickel metallocenter. This process requires GTP hydrolysis, probably effectuated by UreG. The polypeptide is Urease accessory protein UreG (Azotobacter vinelandii (strain DJ / ATCC BAA-1303)).